A 188-amino-acid chain; its full sequence is Elongation factor P-like protein (188 aa).

Belongs to the elongation factor P family.

The chain is Elongation factor P-like protein from Xanthomonas axonopodis pv. citri (strain 306).